A 355-amino-acid polypeptide reads, in one-letter code: UDP-N-acetylglucosamine--N-acetylmuramyl-(pentapeptide) pyrophosphoryl-undecaprenol N-acetylglucosamine transferase (355 aa).

UDP-N-acetyl-alpha-D-glucosamine contacts are provided by residues 14 to 16 (TGG), Asn-126, Arg-162, Ser-190, Ile-243, 262 to 267 (ALTVSE), and Gln-287.

This sequence belongs to the glycosyltransferase 28 family. MurG subfamily.

It is found in the cell inner membrane. The enzyme catalyses di-trans,octa-cis-undecaprenyl diphospho-N-acetyl-alpha-D-muramoyl-L-alanyl-D-glutamyl-meso-2,6-diaminopimeloyl-D-alanyl-D-alanine + UDP-N-acetyl-alpha-D-glucosamine = di-trans,octa-cis-undecaprenyl diphospho-[N-acetyl-alpha-D-glucosaminyl-(1-&gt;4)]-N-acetyl-alpha-D-muramoyl-L-alanyl-D-glutamyl-meso-2,6-diaminopimeloyl-D-alanyl-D-alanine + UDP + H(+). Its pathway is cell wall biogenesis; peptidoglycan biosynthesis. In terms of biological role, cell wall formation. Catalyzes the transfer of a GlcNAc subunit on undecaprenyl-pyrophosphoryl-MurNAc-pentapeptide (lipid intermediate I) to form undecaprenyl-pyrophosphoryl-MurNAc-(pentapeptide)GlcNAc (lipid intermediate II). The protein is UDP-N-acetylglucosamine--N-acetylmuramyl-(pentapeptide) pyrophosphoryl-undecaprenol N-acetylglucosamine transferase of Vibrio campbellii (strain ATCC BAA-1116).